The chain runs to 320 residues: Membrane protein insertase YidC 2 (320 aa).

An N-terminal signal peptide occupies residues 1-23 (MKNLKKKLTLTGLMTAGLLFLSG). Residue Cys-24 is the site of N-palmitoyl cysteine attachment. Residue Cys-24 is the site of S-diacylglycerol cysteine attachment. The next 5 membrane-spanning stretches (helical) occupy residues 68–88 (YGWGIIFVTLIIRFLILPLGL), 142–162 (MLSSIGCLPMLIQWPFFIALY), 178–198 (GIPLGHPSVVLVIISGVLYFI), 217–237 (AMLIMSPAMIVVFSFMSPAGV), and 239–259 (LYWAVGGFVIVIQQIIITFIM). A disordered region spans residues 270–320 (EFTKNPPKINNEGLKDVTPTSVQENFKEITSERNEKERKSGGRNAGKQNRK). Residues 294-309 (NFKEITSERNEKERKS) are compositionally biased toward basic and acidic residues.

The protein belongs to the OXA1/ALB3/YidC family. Type 2 subfamily.

The protein localises to the cell membrane. Its function is as follows. Required for the insertion and/or proper folding and/or complex formation of integral membrane proteins into the membrane. Involved in integration of membrane proteins that insert both dependently and independently of the Sec translocase complex, as well as at least some lipoproteins. The sequence is that of Membrane protein insertase YidC 2 from Lactococcus lactis subsp. lactis (strain IL1403) (Streptococcus lactis).